We begin with the raw amino-acid sequence, 381 residues long: Gas vesicle protein C (381 aa).

7 consecutive repeat copies span residues Gln-22–Asn-59, Asp-60–Arg-84, Asp-85–His-122, Glu-123–Gln-160, Gly-161–Ala-192, Asp-193–Glu-232, and Glu-233–Ile-274. The interval Gln-22–Ile-274 is 7 X approximate tandem repeats. The segment at Ala-261–Thr-333 is disordered. The segment covering Asp-276–Gln-318 has biased composition (acidic residues).

This sequence belongs to the halobacterial gas vesicle GvpC family. Detected as 2 slightly different sizes in vivo; the proteins appears larger in SDS-PAGE probably due to the acidic tail.

The protein localises to the gas vesicle. Confers stability, involved in shaping gas vesicles (GV), hollow, gas filled proteinaceous nanostructures found in some microorganisms. They allow positioning of halobacteria at the optimal depth for growth in the poorly aerated, shallow brine pools of their habitat. Its function is as follows. Expression of a 9.5 kb mc-vac DNA fragment containing 2 divergently transcribed regions (gvpD-gvpE-gvpF-gvpG-gvpH-gvpI-gvpJ-gvpK-gvpL-gvpM and gvpA-gvpC-gvpN-gvpO) allows H.volcanii to produce gas vesicles. This Haloferax mediterranei (strain ATCC 33500 / DSM 1411 / JCM 8866 / NBRC 14739 / NCIMB 2177 / R-4) (Halobacterium mediterranei) protein is Gas vesicle protein C.